Consider the following 133-residue polypeptide: Ribulose bisphosphate carboxylase small subunit (133 aa).

The protein belongs to the RuBisCO small chain family. In terms of assembly, heterohexadecamer of 8 large and 8 small subunits.

Its function is as follows. RuBisCO catalyzes two reactions: the carboxylation of D-ribulose 1,5-bisphosphate, the primary event in carbon dioxide fixation, as well as the oxidative fragmentation of the pentose substrate. Both reactions occur simultaneously and in competition at the same active site. Although the small subunit is not catalytic it is essential for maximal activity. This is Ribulose bisphosphate carboxylase small subunit from Xanthobacter flavus.